Here is a 117-residue protein sequence, read N- to C-terminus: Large ribosomal subunit protein bL17 (117 aa).

The protein belongs to the bacterial ribosomal protein bL17 family. In terms of assembly, part of the 50S ribosomal subunit. Contacts protein L32.

This chain is Large ribosomal subunit protein bL17, found in Coprothermobacter proteolyticus (strain ATCC 35245 / DSM 5265 / OCM 4 / BT).